We begin with the raw amino-acid sequence, 395 residues long: Glyceraldehyde-3-phosphate dehydrogenase, testis-specific (395 aa).

Residues 1-60 (MSKRDIVLTNVTVVQLLRQPCPEPRVEAEPEPPAQPQPQPEPIKEEVPPPPPPPPAPKKV) are testis-specific N-terminal extension. Residues 19-59 (QPCPEPRVEAEPEPPAQPQPQPEPIKEEVPPPPPPPPAPKK) form a disordered region. Pro residues-rich tracts occupy residues 31 to 41 (EPPAQPQPQPE) and 48 to 57 (PPPPPPPPAP). NAD(+) contacts are provided by residues 72 to 73 (RI), aspartate 93, and lysine 138. Residues 210–212 (SCT), threonine 241, 270–271 (TG), and arginine 293 contribute to the D-glyceraldehyde 3-phosphate site. Cysteine 211 functions as the Nucleophile in the catalytic mechanism. Asparagine 375 contacts NAD(+).

It belongs to the glyceraldehyde-3-phosphate dehydrogenase family. Homotetramer.

The protein resides in the cytoplasm. The enzyme catalyses D-glyceraldehyde 3-phosphate + phosphate + NAD(+) = (2R)-3-phospho-glyceroyl phosphate + NADH + H(+). The protein operates within carbohydrate degradation; glycolysis; pyruvate from D-glyceraldehyde 3-phosphate: step 1/5. Functionally, may play an important role in regulating the switch between different pathways for energy production during spermiogenesis and in the spermatozoon. Required for sperm motility and male fertility. In Bos taurus (Bovine), this protein is Glyceraldehyde-3-phosphate dehydrogenase, testis-specific (GAPDHS).